Reading from the N-terminus, the 83-residue chain is Large ribosomal subunit protein bL27 (83 aa).

Positions 1-26 are disordered; that stretch reads MAHKKAGGSSKNGRDSRGQRRGVKRF.

Belongs to the bacterial ribosomal protein bL27 family.

This Desulfosudis oleivorans (strain DSM 6200 / JCM 39069 / Hxd3) (Desulfococcus oleovorans) protein is Large ribosomal subunit protein bL27.